A 272-amino-acid chain; its full sequence is Undecaprenyl-diphosphatase (272 aa).

The next 8 membrane-spanning stretches (helical) occupy residues 6–26, 45–65, 89–109, 115–135, 156–176, 189–209, 221–241, and 251–271; these read SLLV…LPVS, AKTF…VMFW, LSLI…LVFH, LFNP…LIIA, AFFI…RSGA, YAAS…ATAL, ADLP…LVAI, and ISFI…FAVF.

The protein belongs to the UppP family.

Its subcellular location is the cell inner membrane. It catalyses the reaction di-trans,octa-cis-undecaprenyl diphosphate + H2O = di-trans,octa-cis-undecaprenyl phosphate + phosphate + H(+). Catalyzes the dephosphorylation of undecaprenyl diphosphate (UPP). Confers resistance to bacitracin. This Cronobacter sakazakii (strain ATCC BAA-894) (Enterobacter sakazakii) protein is Undecaprenyl-diphosphatase.